The sequence spans 27 residues: Paragonial peptide PS-1 (27 aa).

Positions 1 to 17 are enriched in low complexity; it reads DVPSANANANNQRTAAA. A disordered region spans residues 1–27; it reads DVPSANANANNQRTAAAKPQANAEASS.

Main cells of the accessory glands of males (paragonial gland).

The protein resides in the secreted. In terms of biological role, represses female sexual receptivity and stimulates oviposition. This peptide has a low activity. This Drosophila funebris (Fruit fly) protein is Paragonial peptide PS-1 (PapC).